The sequence spans 366 residues: Pectinesterase A (366 aa).

The first 24 residues, 1-24, serve as a signal peptide directing secretion; sequence MLKTISGTLALSLIIAASVHQAQA. Substrate contacts are provided by Thr-109 and Gln-153. Asp-178 functions as the Proton donor in the catalytic mechanism. Cys-192 and Cys-212 are oxidised to a cystine. Catalysis depends on Asp-199, which acts as the Nucleophile. 6 residues coordinate substrate: Arg-219, Asn-226, Tyr-230, Arg-267, Trp-269, and Thr-272.

The protein belongs to the pectinesterase family. In terms of assembly, monomer.

The protein localises to the secreted. It catalyses the reaction [(1-&gt;4)-alpha-D-galacturonosyl methyl ester](n) + n H2O = [(1-&gt;4)-alpha-D-galacturonosyl](n) + n methanol + n H(+). It participates in glycan metabolism; pectin degradation; 2-dehydro-3-deoxy-D-gluconate from pectin: step 1/5. In terms of biological role, catalyzes the first step in maceration and soft-rotting of plant tissue. This is Pectinesterase A from Dickeya dadantii (strain 3937) (Erwinia chrysanthemi (strain 3937)).